Consider the following 103-residue polypeptide: Large ribosomal subunit protein bL21 (103 aa).

This sequence belongs to the bacterial ribosomal protein bL21 family. In terms of assembly, part of the 50S ribosomal subunit. Contacts protein L20.

Its function is as follows. This protein binds to 23S rRNA in the presence of protein L20. This chain is Large ribosomal subunit protein bL21, found in Burkholderia mallei (strain NCTC 10247).